The sequence spans 359 residues: Chorismate synthase (359 aa).

NADP(+) is bound at residue Arg-47. FMN-binding positions include 123–125 (RSS), Gly-283, 298–302 (KPTSS), and Arg-326.

The protein belongs to the chorismate synthase family. As to quaternary structure, homotetramer. It depends on FMNH2 as a cofactor.

It catalyses the reaction 5-O-(1-carboxyvinyl)-3-phosphoshikimate = chorismate + phosphate. Its pathway is metabolic intermediate biosynthesis; chorismate biosynthesis; chorismate from D-erythrose 4-phosphate and phosphoenolpyruvate: step 7/7. Its function is as follows. Catalyzes the anti-1,4-elimination of the C-3 phosphate and the C-6 proR hydrogen from 5-enolpyruvylshikimate-3-phosphate (EPSP) to yield chorismate, which is the branch point compound that serves as the starting substrate for the three terminal pathways of aromatic amino acid biosynthesis. This reaction introduces a second double bond into the aromatic ring system. The sequence is that of Chorismate synthase from Chlamydia felis (strain Fe/C-56) (Chlamydophila felis).